Here is a 323-residue protein sequence, read N- to C-terminus: MKLHLKGLRIAFFGTSDFAAYHLFVLIHCSIHKIVAIFTQESIKIKQKSSILSIHTISQINNILLFQSYFLSQSQINHIIKNLNIDIIIVVSYGVILSQEILHIPKLGCINIHGSLLPRWRGPAPIQRALEHGDTMTGISIIQMNSNIDTGDILHSTPCKISPKDTSYTLSKKLACIGSIALLKTIEKIILGTCKNIPQDTSNITYAYKLNKKEAHINWNKSAIEIERRIRAFNPWPVSYFKIKNQYIRVWNAEINKNSINTDQYNDFQPGTILKTHPNGIYVITGSGIIILTVLQISGKKKIHVKDLMNAYSSLFTMHSVLT.

115-118 (SLLP) is a (6S)-5,6,7,8-tetrahydrofolate binding site.

This sequence belongs to the Fmt family.

It carries out the reaction L-methionyl-tRNA(fMet) + (6R)-10-formyltetrahydrofolate = N-formyl-L-methionyl-tRNA(fMet) + (6S)-5,6,7,8-tetrahydrofolate + H(+). Attaches a formyl group to the free amino group of methionyl-tRNA(fMet). The formyl group appears to play a dual role in the initiator identity of N-formylmethionyl-tRNA by promoting its recognition by IF2 and preventing the misappropriation of this tRNA by the elongation apparatus. The chain is Methionyl-tRNA formyltransferase from Blochmanniella floridana.